A 261-amino-acid chain; its full sequence is Bidirectional sugar transporter SWEET1b (261 aa).

The Extracellular portion of the chain corresponds to 1–6 (MEDLAK). Residues 7–27 (FLFGVSGNVIALFLFLSPVPT) traverse the membrane as a helical segment. The region spanning 7-95 (FLFGVSGNVI…VVFLVFASTH (89 aa)) is the MtN3/slv 1 domain. The Cytoplasmic portion of the chain corresponds to 28–42 (FWRIIRRKSTEDFSG). Residues 43–63 (VPYNMTLINCLLSAWYGLPFV) form a helical membrane-spanning segment. The Extracellular segment spans residues 64 to 71 (SPNNILVS). Residues 72-92 (TINGAGAVIETAYVVVFLVFA) form a helical membrane-spanning segment. Over 93–101 (STHKTRLRT) the chain is Cytoplasmic. The chain crosses the membrane as a helical span at residues 102–122 (LGLAAAVASVFAAVALVSLLA). Topologically, residues 123 to 129 (LHGQHRK) are extracellular. The helical transmembrane segment at 130–150 (LLCGVAATVCSICMYASPLSI) threads the bilayer. The MtN3/slv 2 domain maps to 133–215 (GVAATVCSIC…VLYAIYRNNK (83 aa)). The Cytoplasmic segment spans residues 151 to 164 (MRLVIKTKSVEYMP). The chain crosses the membrane as a helical span at residues 165 to 185 (FLLSLAVFLCGTSWFIYGLLG). At 186 to 189 (RDPF) the chain is on the extracellular side. A helical transmembrane segment spans residues 190-210 (VTIPNGCGSFLGAVQLVLYAI). Residues 211–261 (YRNNKGAGGGSGGKQAGDDDVEMAEGRNNKVADGGAAEDDSTAGGKAGTEV) are Cytoplasmic-facing. The segment at 218 to 261 (GGGSGGKQAGDDDVEMAEGRNNKVADGGAAEDDSTAGGKAGTEV) is disordered.

Belongs to the SWEET sugar transporter family. Forms homodimers.

It is found in the cell membrane. It carries out the reaction D-glucose(out) = D-glucose(in). It catalyses the reaction D-galactose(in) = D-galactose(out). Functionally, mediates transport of sugars across the plasma membrane. Can transport glucose and galactose, but not fructose, mannose and sucrose. The polypeptide is Bidirectional sugar transporter SWEET1b (SWEET1B) (Oryza sativa subsp. indica (Rice)).